Here is an 821-residue protein sequence, read N- to C-terminus: MSDSQSNKQNQGEDDNNVSSSIESNENYPFRLNDEESEPQSSTTESMLKAKKQSWRQVLMLGFSSLGAIYGDIGTSPLYVLNSIKYPNSSPTEEDIYGAISIIFYLFTFIVIFKYILIVLFLGTNDGEGGQVAIYAKIARSLKIGPKGVHIPGSPEKTDLELLARAETSSSFKSSNLFLNKASGFKTNPKLIKFISKFILFGCFFGCSLVMSDGLLTPTTSVLSAIAGIQIANPSFNDVLAVSEVVLIVLFLIQQFGSNKISFTFAPIIFLWLIGLIISGIYNIVKFHPAVFKSLSPYYAIQLLKHSGIDVFSGAMLSITGTEAMFADVGHFGRLPIQLTLTLFVYPALIICYLGQGAYIIKHPEALSNPFFYSIPGGLNSWIYWVMFVLATLSTIIASQALILGVFSITSQLINLDCFPNFKIIHVSKKYAGKVYIPAINWLLMIGVCATTAGFKNSNNVTAAYGLGITLDFLVTSSLIMVCMTYVYNWNILIPITYALIFLPLEVIMVISNLKKITHGAWFPLMMSGIFMMFLSFWRWARSRKVNQDFKTRIRIGDLYPELKKQPPQSETVDLNDRGRPMSIVNSSNEELVEYGVTLPKILKTNNNQLKVQSKFGLMNLKKYDGIAIMYNDSSVHTLNSPNTVPQVYGKLVSSFSSIPSVFIFCSIRVLSIPTVPNDERVLIGSMKIPGHYRCIIRYGFMEEILIDKELNNHILNSIPDINELAIKFNLNNKCILTKPCTIPILHIFENNLIRSHDYSSEEHETKNPLVKCKRFIRKILINHIFSPIYSDFQSNGKFLKISDEDEESEKKMFLGGVVRI.

Over residues 1–10 (MSDSQSNKQN) the composition is skewed to polar residues. The interval 1-47 (MSDSQSNKQNQGEDDNNVSSSIESNENYPFRLNDEESEPQSSTTESM) is disordered. Residues 1-57 (MSDSQSNKQNQGEDDNNVSSSIESNENYPFRLNDEESEPQSSTTESMLKAKKQSWRQ) are Cytoplasmic-facing. Residues 17-27 (NVSSSIESNEN) are compositionally biased toward low complexity. Residues 58–78 (VLMLGFSSLGAIYGDIGTSPL) traverse the membrane as a helical segment. The Extracellular segment spans residues 79–101 (YVLNSIKYPNSSPTEEDIYGAIS). A helical membrane pass occupies residues 102-122 (IIFYLFTFIVIFKYILIVLFL). Over 123–190 (GTNDGEGGQV…KASGFKTNPK (68 aa)) the chain is Cytoplasmic. The helical transmembrane segment at 191-211 (LIKFISKFILFGCFFGCSLVM) threads the bilayer. Residues 212–238 (SDGLLTPTTSVLSAIAGIQIANPSFND) lie on the Extracellular side of the membrane. A helical membrane pass occupies residues 239 to 259 (VLAVSEVVLIVLFLIQQFGSN). K260 is a topological domain (cytoplasmic). A helical membrane pass occupies residues 261-281 (ISFTFAPIIFLWLIGLIISGI). At 282–306 (YNIVKFHPAVFKSLSPYYAIQLLKH) the chain is on the extracellular side. The chain crosses the membrane as a helical span at residues 307-327 (SGIDVFSGAMLSITGTEAMFA). The Cytoplasmic segment spans residues 328–340 (DVGHFGRLPIQLT). A helical membrane pass occupies residues 341-361 (LTLFVYPALIICYLGQGAYII). Topologically, residues 362-386 (KHPEALSNPFFYSIPGGLNSWIYWV) are extracellular. A helical transmembrane segment spans residues 387 to 407 (MFVLATLSTIIASQALILGVF). At 408–434 (SITSQLINLDCFPNFKIIHVSKKYAGK) the chain is on the cytoplasmic side. The helical transmembrane segment at 435-455 (VYIPAINWLLMIGVCATTAGF) threads the bilayer. Topologically, residues 456–463 (KNSNNVTA) are extracellular. N-linked (GlcNAc...) asparagine glycosylation is present at N460. The chain crosses the membrane as a helical span at residues 464–484 (AYGLGITLDFLVTSSLIMVCM). At 485-491 (TYVYNWN) the chain is on the cytoplasmic side. The helical transmembrane segment at 492-512 (ILIPITYALIFLPLEVIMVIS) threads the bilayer. The Extracellular portion of the chain corresponds to 513-516 (NLKK). Residues 517–537 (ITHGAWFPLMMSGIFMMFLSF) traverse the membrane as a helical segment. The Cytoplasmic segment spans residues 538–821 (WRWARSRKVN…KMFLGGVVRI (284 aa)).

It belongs to the HAK/KUP transporter (TC 2.A.72) family.

It localises to the membrane. Its function is as follows. Major high-affinity potassium uptake protein. The sequence is that of High affinity potassium transporter (HAK1) from Schwanniomyces occidentalis (Yeast).